Reading from the N-terminus, the 946-residue chain is RIPOR family member 3 (946 aa).

Ser9, Ser24, and Ser340 each carry phosphoserine. Thr345 bears the Phosphothreonine mark. Phosphoserine occurs at positions 351 and 384. The interval Gly390 to Ala512 is disordered. Basic and acidic residues predominate over residues Ser437–Pro446. Residues Ser478–Asn495 are compositionally biased toward polar residues. The span at Gly496–Gly508 shows a compositional bias: basic and acidic residues.

The protein belongs to the RIPOR family.

This is RIPOR family member 3 from Homo sapiens (Human).